A 233-amino-acid chain; its full sequence is CDP-diacylglycerol--glycerol-3-phosphate 3-phosphatidyltransferase 2 (233 aa).

A disordered region spans residues Met-1–Arg-23. Helical transmembrane passes span Val-40–Ala-60, Thr-71–Ala-91, Phe-100–Leu-120, Met-125–Ile-145, and Leu-201–Val-221.

It belongs to the CDP-alcohol phosphatidyltransferase class-I family. The cofactor is Mn(2+).

The protein localises to the microsome membrane. It is found in the endoplasmic reticulum membrane. It catalyses the reaction a CDP-1,2-diacyl-sn-glycerol + sn-glycerol 3-phosphate = a 1,2-diacyl-sn-glycero-3-phospho-(1'-sn-glycero-3'-phosphate) + CMP + H(+). It functions in the pathway phospholipid metabolism; phosphatidylglycerol biosynthesis; phosphatidylglycerol from CDP-diacylglycerol: step 1/2. In terms of biological role, catalyzes the committed step to the synthesis of the acidic phospholipids, including phosphatidylglycerol (PG). Together with PGPS1, required for the proper embryo development by providing PG accurate levels. This chain is CDP-diacylglycerol--glycerol-3-phosphate 3-phosphatidyltransferase 2, found in Arabidopsis thaliana (Mouse-ear cress).